Reading from the N-terminus, the 531-residue chain is tRNA-2-methylthio-N(6)-dimethylallyladenosine synthase (531 aa).

The segment at 1-26 (MNEKQRLEQTGQIKTESHPADRKSAL) is disordered. Residues 15–26 (TESHPADRKSAL) show a composition bias toward basic and acidic residues. The MTTase N-terminal domain occupies 80–198 (RKFYIRTYGC…LPYILHEAYM (119 aa)). Residues C89, C125, C159, C235, C239, and C242 each coordinate [4Fe-4S] cluster. The region spanning 221–451 (RKGKIKAWVN…NDLVQEIAAK (231 aa)) is the Radical SAM core domain. One can recognise a TRAM domain in the interval 454 to 517 (KQYEGQVVEV…TWTLTGELVN (64 aa)).

This sequence belongs to the methylthiotransferase family. MiaB subfamily. Monomer. [4Fe-4S] cluster is required as a cofactor.

It is found in the cytoplasm. It carries out the reaction N(6)-dimethylallyladenosine(37) in tRNA + (sulfur carrier)-SH + AH2 + 2 S-adenosyl-L-methionine = 2-methylsulfanyl-N(6)-dimethylallyladenosine(37) in tRNA + (sulfur carrier)-H + 5'-deoxyadenosine + L-methionine + A + S-adenosyl-L-homocysteine + 2 H(+). In terms of biological role, catalyzes the methylthiolation of N6-(dimethylallyl)adenosine (i(6)A), leading to the formation of 2-methylthio-N6-(dimethylallyl)adenosine (ms(2)i(6)A) at position 37 in tRNAs that read codons beginning with uridine. In Geobacillus kaustophilus (strain HTA426), this protein is tRNA-2-methylthio-N(6)-dimethylallyladenosine synthase.